The sequence spans 329 residues: Lipoyl synthase (329 aa).

Residues C72, C77, C83, C98, C102, C105, and S313 each contribute to the [4Fe-4S] cluster site. The Radical SAM core domain maps to 83 to 303; the sequence is CWSHGTATIM…QIGLKKGFFE (221 aa).

It belongs to the radical SAM superfamily. Lipoyl synthase family. The cofactor is [4Fe-4S] cluster.

The protein resides in the cytoplasm. It carries out the reaction [[Fe-S] cluster scaffold protein carrying a second [4Fe-4S](2+) cluster] + N(6)-octanoyl-L-lysyl-[protein] + 2 oxidized [2Fe-2S]-[ferredoxin] + 2 S-adenosyl-L-methionine + 4 H(+) = [[Fe-S] cluster scaffold protein] + N(6)-[(R)-dihydrolipoyl]-L-lysyl-[protein] + 4 Fe(3+) + 2 hydrogen sulfide + 2 5'-deoxyadenosine + 2 L-methionine + 2 reduced [2Fe-2S]-[ferredoxin]. It participates in protein modification; protein lipoylation via endogenous pathway; protein N(6)-(lipoyl)lysine from octanoyl-[acyl-carrier-protein]: step 2/2. Functionally, catalyzes the radical-mediated insertion of two sulfur atoms into the C-6 and C-8 positions of the octanoyl moiety bound to the lipoyl domains of lipoate-dependent enzymes, thereby converting the octanoylated domains into lipoylated derivatives. This Legionella pneumophila (strain Corby) protein is Lipoyl synthase.